Reading from the N-terminus, the 164-residue chain is Type II secretion system protein M (164 aa).

The Cytoplasmic portion of the chain corresponds to 1-17; sequence MNELRQRWQAMSQRERQ. The helical transmembrane segment at 18-38 threads the bilayer; sequence LMVVCAAVLLLCVVYYAILQP. Residues 39-164 lie on the Periplasmic side of the membrane; that stretch reads WQEREDLWER…RLMLERTDEA (126 aa).

The protein belongs to the GSP M family. In terms of assembly, type II secretion system is composed of four main components: the outer membrane complex, the inner membrane complex, the cytoplasmic secretion ATPase and the periplasm-spanning pseudopilus. Forms homodimers. Interacts with OutL/GspL. Interacts with OutE/GspE and OutF/GspF.

It localises to the cell inner membrane. In terms of biological role, inner membrane component of the type II secretion system required for the energy-dependent secretion of extracellular factors such as proteases and toxins from the periplasm. Plays a role in the complex assembly and recruits OutL resulting in a stable complex in the inner membrane. Provides thus a link between the energy-providing OutE protein in the cytoplasm and the rest of the T2SS machinery. This is Type II secretion system protein M (outM) from Pectobacterium carotovorum subsp. carotovorum (Erwinia carotovora subsp. carotovora).